The sequence spans 436 residues: GTPase Der (436 aa).

2 consecutive EngA-type G domains span residues 4–167 and 176–351; these read PVIA…PKIE and IRFS…ESHS. GTP contacts are provided by residues 10 to 17, 57 to 61, 119 to 122, 182 to 189, 229 to 233, and 294 to 297; these read GRPNVGKS, DTGGI, NKVD, DTAGM, and NKWD. In terms of domain architecture, KH-like spans 352-436; sequence IRVQTNVLND…PIHIIARARD (85 aa).

This sequence belongs to the TRAFAC class TrmE-Era-EngA-EngB-Septin-like GTPase superfamily. EngA (Der) GTPase family. Associates with the 50S ribosomal subunit.

GTPase that plays an essential role in the late steps of ribosome biogenesis. This is GTPase Der from Bacillus mycoides (strain KBAB4) (Bacillus weihenstephanensis).